The sequence spans 375 residues: tRNA-specific 2-thiouridylase MnmA (375 aa).

ATP-binding positions include 8 to 15 and Met34; that span reads GLSGGVDS. The segment at 104-106 is interaction with target base in tRNA; the sequence is NPD. Cys109 serves as the catalytic Nucleophile. An intrachain disulfide couples Cys109 to Cys208. Gly134 serves as a coordination point for ATP. The interval 158–160 is interaction with tRNA; it reads KDQ. The Cysteine persulfide intermediate role is filled by Cys208. Positions 321–322 are interaction with tRNA; that stretch reads RY.

It belongs to the MnmA/TRMU family.

It localises to the cytoplasm. It carries out the reaction S-sulfanyl-L-cysteinyl-[protein] + uridine(34) in tRNA + AH2 + ATP = 2-thiouridine(34) in tRNA + L-cysteinyl-[protein] + A + AMP + diphosphate + H(+). Functionally, catalyzes the 2-thiolation of uridine at the wobble position (U34) of tRNA, leading to the formation of s(2)U34. This Mycoplasma capricolum subsp. capricolum (strain California kid / ATCC 27343 / NCTC 10154) protein is tRNA-specific 2-thiouridylase MnmA.